A 242-amino-acid chain; its full sequence is Mediator of RNA polymerase II transcription subunit 19-A (242 aa).

Residues 1 to 15 (MTEIFSTLFGQNDAQ) are compositionally biased toward polar residues. Disordered regions lie at residues 1–33 (MTEI…PPPS) and 171–242 (PPKK…NSLR). Basic residues predominate over residues 171 to 184 (PPKKKSKHKHRHHH). Positions 193 to 210 (TRTDPTKKKKKKDNEPER) are enriched in basic and acidic residues. The span at 211-223 (RKKKKDKKKKKNR) shows a compositional bias: basic residues. The segment covering 232–242 (TGSQPNSNSLR) has biased composition (polar residues).

The protein belongs to the Mediator complex subunit 19 family. In terms of assembly, component of the Mediator complex.

It is found in the nucleus. Its function is as follows. Component of the Mediator complex, a coactivator involved in the regulated transcription of nearly all RNA polymerase II-dependent genes. Mediator functions as a bridge to convey information from gene-specific regulatory proteins to the basal RNA polymerase II transcription machinery. Mediator is recruited to promoters by direct interactions with regulatory proteins and serves as a scaffold for the assembly of a functional preinitiation complex with RNA polymerase II and the general transcription factors. The sequence is that of Mediator of RNA polymerase II transcription subunit 19-A (med19a) from Danio rerio (Zebrafish).